A 169-amino-acid chain; its full sequence is Endoribonuclease YbeY (169 aa).

The Zn(2+) site is built by H128, H132, and H138.

This sequence belongs to the endoribonuclease YbeY family. The cofactor is Zn(2+).

It is found in the cytoplasm. Functionally, single strand-specific metallo-endoribonuclease involved in late-stage 70S ribosome quality control and in maturation of the 3' terminus of the 16S rRNA. In Cyanothece sp. (strain PCC 7425 / ATCC 29141), this protein is Endoribonuclease YbeY.